Consider the following 126-residue polypeptide: Large ribosomal subunit protein bL12 (126 aa).

Belongs to the bacterial ribosomal protein bL12 family. As to quaternary structure, homodimer. Part of the ribosomal stalk of the 50S ribosomal subunit. Forms a multimeric L10(L12)X complex, where L10 forms an elongated spine to which 2 to 4 L12 dimers bind in a sequential fashion. Binds GTP-bound translation factors.

In terms of biological role, forms part of the ribosomal stalk which helps the ribosome interact with GTP-bound translation factors. Is thus essential for accurate translation. The polypeptide is Large ribosomal subunit protein bL12 (Bifidobacterium longum subsp. infantis (strain ATCC 15697 / DSM 20088 / JCM 1222 / NCTC 11817 / S12)).